We begin with the raw amino-acid sequence, 60 residues long: Cytotoxin 3 (60 aa).

4 cysteine pairs are disulfide-bonded: C3/C21, C14/C38, C42/C53, and C54/C59.

The protein belongs to the three-finger toxin family. Short-chain subfamily. Type IA cytotoxin sub-subfamily. As to quaternary structure, monomer in solution; Homodimer and oligomer in the presence of negatively charged lipids forming a pore with a size ranging between 20 and 30 Angstroms. In terms of tissue distribution, expressed by the venom gland.

It localises to the secreted. The protein resides in the target cell membrane. In terms of biological role, shows cytolytic activity on many different cells by forming pore in lipid membranes. In vivo, increases heart rate or kills the animal by cardiac arrest. In addition, it binds to heparin with high affinity, interacts with Kv channel-interacting protein 1 (KCNIP1) in a calcium-independent manner, and binds to integrin alpha-V/beta-3 (ITGAV/ITGB3) with moderate affinity. This Naja naja (Indian cobra) protein is Cytotoxin 3.